A 1161-amino-acid polypeptide reads, in one-letter code: Perforin-like protein 1 (1161 aa).

A helical membrane pass occupies residues 67–86 (LWITFVCLLTLHMFGLSSAV). The interval 154 to 329 (PEALNEVPTK…LGDSSALDLF (176 aa)) is disordered. 2 stretches are compositionally biased toward basic and acidic residues: residues 162–177 (TKVE…DKTE) and 184–194 (ADHKSLLEGRS). Acidic residues predominate over residues 201 to 211 (PDDDFDFLFED). The span at 222-234 (NKGTSSDETSPGD) shows a compositional bias: polar residues. Residues 238–249 (GEGSSASDSLLS) are compositionally biased toward low complexity. A glycan (N-linked (GlcNAc...) asparagine) is linked at Asn257. Over residues 264-283 (NQKRITHPKSKAQHQKKVTK) the composition is skewed to basic residues. Residues 309 to 322 (NTQADDSQRQSLGD) are compositionally biased toward polar residues. Asn344 carries an N-linked (GlcNAc...) asparagine glycan. The disordered stretch occupies residues 353–381 (AANDGGLFSSSGMGPTGASDETSANPLGS). Polar residues predominate over residues 361 to 378 (SSSGMGPTGASDETSANP). The MACPF domain occupies 463–817 (LSAVYTKATK…LTPQDLSALT (355 aa)). The cysteines at positions 539 and 602 are disulfide-linked. The N-linked (GlcNAc...) asparagine glycan is linked to Asn550. The beta stranded transmembrane segment at 554–589 (YQNELSVDASLQGGDPIGLNSFSASTGYRDFAKEVS) threads the bilayer. N-linked (GlcNAc...) asparagine glycosylation is present at Asn618. Cys643 and Cys657 form a disulfide bridge. The chain crosses the membrane as a beta stranded span at residues 694–740 (RSEVEKMRNMGIDVKTQLKMQLGGVSGGAGQGTSSKKNQSSSEYQMN). Residues 716–736 (GGVSGGAGQGTSSKKNQSSSE) are disordered. The N-linked (GlcNAc...) asparagine glycan is linked to Asn755. 6 disulfides stabilise this stretch: Cys845–Cys900, Cys874–Cys881, Cys928–Cys981, Cys957–Cys964, Cys1019–Cys1080, and Cys1047–Cys1054. Residues Asn1022, Asn1050, and Asn1111 are each glycosylated (N-linked (GlcNAc...) asparagine). Residues 1094–1149 (VGKAKGNGKKKKGKKGKNKTNAPNEVEEGQQLGADSPSQVSVPADADSGPTSKTMS) are disordered. Residues 1099 to 1111 (GNGKKKKGKKGKN) show a composition bias toward basic residues.

Belongs to the MPEG1 family. Homooligomer; forms a homooligomeric pore.

The protein resides in the parasitophorous vacuole membrane. It is found in the cytoplasmic vesicle. It localises to the secretory vesicle. Its subcellular location is the microneme membrane. In terms of biological role, pore-forming protein that promotes parasite exit from host cells: mediates formation of a pore in the parasitophorous vacuolar membrane, leading to membrane permeabilization, thereby facilitating parasite egress from host cells. May also form a pore in the host plasma membrane. Preferentially binds inner leaflet lipids, such as phosphatidylethanolamine (PE) or phosphatidylserine (PS). The sequence is that of Perforin-like protein 1 from Toxoplasma gondii (strain ATCC 50861 / VEG).